Here is a 136-residue protein sequence, read N- to C-terminus: uncharacterized protein (136 aa).

The protein resides in the cytoplasm. It localises to the nucleus. This is an uncharacterized protein from Schizosaccharomyces pombe (strain 972 / ATCC 24843) (Fission yeast).